The primary structure comprises 404 residues: MSVGMAAPRAAYGCDPDRSRGRQFAEPPSNNRSAFRRDCDRVIHSNAFRRLKHKTQVFVFHEGDHYRTRLTHSLEVAQIARAIARQLGLDEDLTETLALAHDLGHPPFGHAGERALDACLRAHGGFDHNAQTLRVLTALEHRYPEFDGLNLTWETLEGVVKHNGPLTDRAGRPLPRYAERGVPIGIVEFSQRFDLELWSFASLEAQVAAIADDIAYDAHDIDDGLRAGLFRVDDLRAVPLTASIIDGIARRYPALDESRRGAELVRELISHLIGAVTAETMRRLGEAAPRSAEEVRHASSAMVAFPIETAAAEAEIKAFLWTHMYRANRVMAVMRDAEAIVADLFQRYCDHPADLPPDWLPTDGPVAECEADRLRRIRNFIAGMTDRYALTEHQRLFDSTPDLR.

A disordered region spans residues 1 to 33 (MSVGMAAPRAAYGCDPDRSRGRQFAEPPSNNRS). Positions 69-217 (RLTHSLEVAQ…AAIADDIAYD (149 aa)) constitute an HD domain.

This sequence belongs to the dGTPase family. Type 2 subfamily.

The chain is Deoxyguanosinetriphosphate triphosphohydrolase-like protein from Rhodopseudomonas palustris (strain BisB5).